A 437-amino-acid polypeptide reads, in one-letter code: Protein WVD2-like 5 (437 aa).

Disordered stretches follow at residues 1 to 22, 38 to 210, and 254 to 437; these read MDPE…GGLA, TVDT…FSFK, and LRKS…AVEH. A compositionally biased stretch (low complexity) spans 41–55; it reads TTSESQNENSANSST. Basic and acidic residues predominate over residues 58–86; that stretch reads TIEHVKEAAEGTQVEHVDDSKCMKGEKAQ. Polar residues predominate over residues 121–140; sequence SNGSVAPNVQTTNPLKSKSF. Positions 151–167 are enriched in basic and acidic residues; that stretch reads GKHDSAPAESADGEKVK. At serine 208 the chain carries Phosphoserine. Residues 288-297 are compositionally biased toward basic residues; that stretch reads KSPKLGRKKT. Over residues 360-371 the composition is skewed to low complexity; it reads PAPAKAAIIPAK. The segment covering 408-437 has biased composition (basic and acidic residues); sequence EDSHETVSPRMNEDRADKSIEVSEAVAVEH. At serine 415 the chain carries Phosphoserine.

This sequence belongs to the TPX2 family. As to expression, expressed in seedlings.

It is found in the cytoplasm. Its subcellular location is the cytoskeleton. Functionally, microtubule-associated protein (MAP) that regulates the orientation of interphase cortical microtubules. This is Protein WVD2-like 5 from Arabidopsis thaliana (Mouse-ear cress).